The chain runs to 306 residues: Acyl transferase (306 aa).

Residues Ser117, Asp214, and His244 each act as charge relay system in the active site.

The protein belongs to the LuxD family.

Its pathway is lipid metabolism; fatty acid reduction for biolumincescence. In terms of biological role, acyl transferase is part of the fatty acid reductase system required for aldehyde biosynthesis; it produces fatty acids for the luminescent reaction. The chain is Acyl transferase from Photobacterium phosphoreum.